Consider the following 297-residue polypeptide: Putative peptidyl-prolyl cis-trans isomerase YacD (297 aa).

Residues methionine 1–alanine 32 form the signal peptide. The PpiC domain occupies aspartate 154–glutamate 247.

The enzyme catalyses [protein]-peptidylproline (omega=180) = [protein]-peptidylproline (omega=0). The polypeptide is Putative peptidyl-prolyl cis-trans isomerase YacD (yacD) (Bacillus subtilis (strain 168)).